The following is a 138-amino-acid chain: Larval cuticle protein 1 (138 aa).

The first 16 residues, 1 to 16, serve as a signal peptide directing secretion; the sequence is MFKFVMVFAVLGVAAA. In terms of domain architecture, Chitin-binding type R&amp;R spans 49-110; it reads ADGFDADLLV…PVGAVLPTPP (62 aa).

Its function is as follows. Component of the larval cuticle. The sequence is that of Larval cuticle protein 1 (Lcp1) from Drosophila miranda (Fruit fly).